Consider the following 94-residue polypeptide: Small ribosomal subunit protein bS18 (94 aa).

The protein belongs to the bacterial ribosomal protein bS18 family. Part of the 30S ribosomal subunit. Forms a tight heterodimer with protein bS6.

In terms of biological role, binds as a heterodimer with protein bS6 to the central domain of the 16S rRNA, where it helps stabilize the platform of the 30S subunit. This Acetivibrio thermocellus (strain ATCC 27405 / DSM 1237 / JCM 9322 / NBRC 103400 / NCIMB 10682 / NRRL B-4536 / VPI 7372) (Clostridium thermocellum) protein is Small ribosomal subunit protein bS18.